Reading from the N-terminus, the 1043-residue chain is Protein SLOW WALKER 2 (1043 aa).

Disordered stretches follow at residues 32–113, 444–469, 632–737, and 861–1043; these read SALP…SIDD, QGADDKGAADKKKSNPKDTKQEVSTD, DIEH…GGYD, and SKKK…KASE. A Nuclear localization signal 1 motif is present at residues 44–51; the sequence is FRKPAKSK. A compositionally biased stretch (basic residues) spans 47–59; sequence PAKSKTQKRKKPK. 2 stretches are compositionally biased toward basic and acidic residues: residues 80-95 and 444-466; these read EKGKDFGARKQNKDAP and QGADDKGAADKKKSNPKDTKQEV. A Nuclear localization signal 2 motif is present at residues 441–448; sequence NRKQGADD. The span at 632 to 645 shows a compositional bias: acidic residues; it reads DIEHFEDVIEGDDV. Residues 646–673 show a composition bias toward basic and acidic residues; sequence DPNKKAENDENVVEVDHDGVEKSSRDGD. Composition is skewed to acidic residues over residues 688-699 and 872-983; these read DEEDDNASDDSE and EEAA…DSDG. Over residues 988-1000 the composition is skewed to basic residues; the sequence is SKKKKKEKRKRKS. The span at 1006–1031 shows a compositional bias: basic and acidic residues; the sequence is EEYKHLIDQDEKEDSKTKRKATSEPT. The short motif at 1022–1029 is the Nuclear localization signal 3 element; it reads TKRKATSE. Over residues 1032–1043 the composition is skewed to basic residues; that stretch reads KKKKKKKSKASE.

The protein belongs to the CBF/MAK21 family. As to quaternary structure, interacts with RBL in both the nucleolus and nucleoplasm. Binds to NOC2. As to expression, mainly expressed in actively dividing tissues (e.g. root tips, lateral root primordia, shoot apices, young leaves, inflorescences and pollen grains) through the plant, including roots, stems, leaves, inflorescences, siliques and seedlings, and in gametophytes.

It localises to the nucleus. Its subcellular location is the nucleolus. In terms of biological role, together with NOC2, probably involved in pre-ribosome export from the nucleus to the cytoplasm. Required for coordinated cell cycle progression during female gametophyte and pollen development. This Arabidopsis thaliana (Mouse-ear cress) protein is Protein SLOW WALKER 2.